The primary structure comprises 278 residues: Phosphoenolpyruvate carboxylase kinase 2 (278 aa).

The 259-residue stretch at 11–269 folds into the Protein kinase domain; that stretch reads YQLCDEIGRG…AEDALRHSWM (259 aa). ATP-binding positions include 17-25 and lysine 40; that span reads IGRGRFGTI. The active-site Proton acceptor is aspartate 137.

This sequence belongs to the protein kinase superfamily. Ser/Thr protein kinase family. In terms of tissue distribution, expressed in flowers and roots, and at lower levels in cauline leaves. Barely detectable in rosette leaves and stems.

The catalysed reaction is L-seryl-[protein] + ATP = O-phospho-L-seryl-[protein] + ADP + H(+). It catalyses the reaction L-threonyl-[protein] + ATP = O-phospho-L-threonyl-[protein] + ADP + H(+). Its function is as follows. Calcium-independent kinase involved in light-dependent phosphoenolpyruvate carboxylase phosphorylation. The polypeptide is Phosphoenolpyruvate carboxylase kinase 2 (PPCK2) (Arabidopsis thaliana (Mouse-ear cress)).